Reading from the N-terminus, the 264-residue chain is Meiotic recombination protein REC102 (264 aa).

It belongs to the TOP6B-like family. In terms of assembly, interacts with REC104; seems to form a functional unit with REC104. REC102-REC104 interacts with SKI8-SPO11 and this interaction is required for proper subcellular location of the proteins during the initiation of recombination. Interacts with MEI4, REC114 and SPO11.

It localises to the nucleus. Its function is as follows. Required for formation of the SPO11-mediated double-strand breaks (DSBs) that initiate meiotic recombination. May mediate the interaction between SPO11 subunits during meiosis. Also needed for homolog chromosome pairing, synaptonemal complex formation, and for the proper timing of the first meiotic division. Not required for mitosis and mitotic DNA repair mechanisms. This chain is Meiotic recombination protein REC102, found in Saccharomyces cerevisiae (strain ATCC 204508 / S288c) (Baker's yeast).